A 92-amino-acid polypeptide reads, in one-letter code: Small ribosomal subunit protein uS19 (92 aa).

It belongs to the universal ribosomal protein uS19 family.

Its function is as follows. Protein S19 forms a complex with S13 that binds strongly to the 16S ribosomal RNA. This is Small ribosomal subunit protein uS19 from Corynebacterium aurimucosum (strain ATCC 700975 / DSM 44827 / CIP 107346 / CN-1) (Corynebacterium nigricans).